We begin with the raw amino-acid sequence, 344 residues long: Glycerol-3-phosphate dehydrogenase [NAD(P)+] (344 aa).

Residues Ser-11, Trp-12, His-32, Arg-33, and Lys-105 each contribute to the NADPH site. Residues Lys-105, Gly-135, and Ser-137 each contribute to the sn-glycerol 3-phosphate site. An NADPH-binding site is contributed by Ala-139. Sn-glycerol 3-phosphate is bound by residues Lys-190, Asp-243, Ser-253, Arg-254, and Asn-255. The Proton acceptor role is filled by Lys-190. Arg-254 lines the NADPH pocket. The NADPH site is built by Val-278 and Glu-280.

The protein belongs to the NAD-dependent glycerol-3-phosphate dehydrogenase family.

The protein resides in the cytoplasm. It carries out the reaction sn-glycerol 3-phosphate + NAD(+) = dihydroxyacetone phosphate + NADH + H(+). The catalysed reaction is sn-glycerol 3-phosphate + NADP(+) = dihydroxyacetone phosphate + NADPH + H(+). It participates in membrane lipid metabolism; glycerophospholipid metabolism. Its function is as follows. Catalyzes the reduction of the glycolytic intermediate dihydroxyacetone phosphate (DHAP) to sn-glycerol 3-phosphate (G3P), the key precursor for phospholipid synthesis. This chain is Glycerol-3-phosphate dehydrogenase [NAD(P)+], found in Oceanobacillus iheyensis (strain DSM 14371 / CIP 107618 / JCM 11309 / KCTC 3954 / HTE831).